Here is a 731-residue protein sequence, read N- to C-terminus: Penicillin-binding protein 2a (731 aa).

The Cytoplasmic segment spans residues 1 to 56 (MKLDKLFEKFLSLFKKETSELEDSDSTILRRSRSDRKKLAQVGPIRKFWRRYHLTK). The helical; Signal-anchor for type II membrane protein transmembrane segment at 57 to 77 (IILILGLSAGLLVGIYLFAVA) threads the bilayer. Positions 78 to 156 (KSTNVNDLQN…FLAIVTAGRS (79 aa)) are hydrophobic; associated with cytoplasmic membrane. Required for transglycosylase activity, but not for lipid II binding. The interval 78–300 (KSTNVNDLQN…SQLHDKYEGK (223 aa)) is transglycosylase. Over 78–731 (KSTNVNDLQN…IWDSIVNLFR (654 aa)) the chain is Extracellular. Glu-131 functions as the Proton donor; for transglycosylase activity in the catalytic mechanism. The transpeptidase stretch occupies residues 301 to 731 (ISDYRYPSYF…IWDSIVNLFR (431 aa)). The active-site Acyl-ester intermediate; for transpeptidase activity is the Ser-410. The segment at 674-694 (ANTKRQVQTNDNSQTDDNLSD) is disordered. Positions 676 to 690 (TKRQVQTNDNSQTDD) are enriched in polar residues.

In the N-terminal section; belongs to the glycosyltransferase 51 family. The protein in the C-terminal section; belongs to the transpeptidase family. As to quaternary structure, homodimer. May also form higher order oligomers. Self-association may depend on its transmembrane and/or cytoplasmic regions. Interacts with MacP; interaction is required for the function of this protein.

It localises to the cell membrane. The protein resides in the secreted. It is found in the cell wall. The catalysed reaction is Preferential cleavage: (Ac)2-L-Lys-D-Ala-|-D-Ala. Also transpeptidation of peptidyl-alanyl moieties that are N-acyl substituents of D-alanine.. The enzyme catalyses [GlcNAc-(1-&gt;4)-Mur2Ac(oyl-L-Ala-gamma-D-Glu-L-Lys-D-Ala-D-Ala)](n)-di-trans,octa-cis-undecaprenyl diphosphate + beta-D-GlcNAc-(1-&gt;4)-Mur2Ac(oyl-L-Ala-gamma-D-Glu-L-Lys-D-Ala-D-Ala)-di-trans,octa-cis-undecaprenyl diphosphate = [GlcNAc-(1-&gt;4)-Mur2Ac(oyl-L-Ala-gamma-D-Glu-L-Lys-D-Ala-D-Ala)](n+1)-di-trans,octa-cis-undecaprenyl diphosphate + di-trans,octa-cis-undecaprenyl diphosphate + H(+). It functions in the pathway cell wall biogenesis; peptidoglycan biosynthesis. In terms of biological role, cell wall formation. Synthesis of cross-linked peptidoglycan (PG) from the lipid intermediates. Binds dansylated lipid II and catalyzes the polymerization of glycan chains. Hydrolyzes S2d (N-benzoyl-D-alanylmercaptoacetic acid) molecule, a synthetic thiolester analog of cell wall stem peptide. Active against bocillin, a fluorescent penicillin. No transpeptidase activity with non-fluorescent lysine-containing lipid II as substrate. The protein is Penicillin-binding protein 2a of Streptococcus pneumoniae serotype 2 (strain D39 / NCTC 7466).